Here is a 1021-residue protein sequence, read N- to C-terminus: Nonribosomal peptide synthetase asaC (1021 aa).

Positions 17–418 (RHHVRTSPNA…ARADNMVKIR (402 aa)) are adenylation (A) domain. Positions 528–603 (KDAGDSVTWL…GLASVIDAGH (76 aa)) constitute a Carrier domain. The residue at position 563 (S563) is an O-(pantetheine 4'-phosphoryl)serine. The tract at residues 646–888 (LTGATGFLGT…MIPVDFITTA (243 aa)) is short-chain dehydrogenase/reductase (R) domain.

It belongs to the NRP synthetase family.

It participates in secondary metabolite biosynthesis. Nonribosomal peptide synthetase; part of the gene cluster that mediates the biosynthesis of aspergillic acid, a hydroxamic acid-containing pyrazinone with aliphatic side chains that originates from leucine (Leu) and isoleucine (Ile). Aspergillic acid has antibiotic properties and was shown to be lethal to mice. The first step in the pathway is the production of deoxyaspergillic acid via a condensation between the Ile amine and the Leu carboxylic acid, followed by a reductive release from the protein forming the dipeptide aldehyde NH(2)-Leu-Ile-CHO, which could undergo an intermolecular cyclization resulting in a dihydropyrazinone. As the NRPS asaC lacks a condensation domain, it is improbable that it is responsible for condensation of Leu and Ile. One possibility is that asaC acts on a previously condensed dipeptide and functions as a Leu-Ile reductase to yield deoxyaspergillic acid. After asaC forms deoxyaspergillic acid, the cytochrome P450 asaD oxidizes the pyrazinone to the hydroxamic acid-containing bioactive metabolite aspergillic acid. The hydroxylase/desaturase asaB can then convert aspergillic acid to hydroxyaspergillic acid. Both aspergillic acid and hydroxyaspergillic acid can form complexes with iron producing ferriaspergillin analogs. The protein is Nonribosomal peptide synthetase asaC of Aspergillus flavus (strain ATCC 200026 / FGSC A1120 / IAM 13836 / NRRL 3357 / JCM 12722 / SRRC 167).